Here is a 471-residue protein sequence, read N- to C-terminus: Adenosylhomocysteinase (471 aa).

Substrate-binding residues include T60, D135, and E196. 197–199 (TTT) contributes to the NAD(+) binding site. Residues K226 and D230 each coordinate substrate. Residues N231, 260 to 265 (GYGDVG), E283, N318, 339 to 341 (IGH), and N387 each bind NAD(+).

The protein belongs to the adenosylhomocysteinase family. Requires NAD(+) as cofactor.

The protein resides in the cytoplasm. It catalyses the reaction S-adenosyl-L-homocysteine + H2O = L-homocysteine + adenosine. The protein operates within amino-acid biosynthesis; L-homocysteine biosynthesis; L-homocysteine from S-adenosyl-L-homocysteine: step 1/1. Functionally, may play a key role in the regulation of the intracellular concentration of adenosylhomocysteine. This chain is Adenosylhomocysteinase, found in Chlorobaculum parvum (strain DSM 263 / NCIMB 8327) (Chlorobium vibrioforme subsp. thiosulfatophilum).